A 207-amino-acid chain; its full sequence is Probable GTP-binding protein EngB (207 aa).

An EngB-type G domain is found at D22–D194. GTP-binding positions include G30–S37, G57–L61, D75–G78, T142–D145, and F173–A175. Mg(2+) is bound by residues S37 and T59.

This sequence belongs to the TRAFAC class TrmE-Era-EngA-EngB-Septin-like GTPase superfamily. EngB GTPase family. Mg(2+) serves as cofactor.

Its function is as follows. Necessary for normal cell division and for the maintenance of normal septation. The chain is Probable GTP-binding protein EngB from Syntrophotalea carbinolica (strain DSM 2380 / NBRC 103641 / GraBd1) (Pelobacter carbinolicus).